A 453-amino-acid chain; its full sequence is Histidine--tRNA ligase (453 aa).

The protein belongs to the class-II aminoacyl-tRNA synthetase family. As to quaternary structure, homodimer.

The protein localises to the cytoplasm. It catalyses the reaction tRNA(His) + L-histidine + ATP = L-histidyl-tRNA(His) + AMP + diphosphate + H(+). This is Histidine--tRNA ligase from Cytophaga hutchinsonii (strain ATCC 33406 / DSM 1761 / CIP 103989 / NBRC 15051 / NCIMB 9469 / D465).